Consider the following 400-residue polypeptide: Phosphoglycerate kinase (400 aa).

Substrate is bound by residues 22 to 24, arginine 37, 60 to 63, arginine 119, and arginine 159; these read DLN and HLGR. Residues lysine 209, glycine 297, glutamate 328, and 354-357 contribute to the ATP site; that span reads GGDS.

Belongs to the phosphoglycerate kinase family. As to quaternary structure, monomer.

The protein resides in the cytoplasm. The enzyme catalyses (2R)-3-phosphoglycerate + ATP = (2R)-3-phospho-glyceroyl phosphate + ADP. It participates in carbohydrate degradation; glycolysis; pyruvate from D-glyceraldehyde 3-phosphate: step 2/5. The protein is Phosphoglycerate kinase of Saccharopolyspora erythraea (strain ATCC 11635 / DSM 40517 / JCM 4748 / NBRC 13426 / NCIMB 8594 / NRRL 2338).